Reading from the N-terminus, the 513-residue chain is ATP synthase subunit alpha (513 aa).

An ATP-binding site is contributed by 169-176 (GDRQCGKT).

It belongs to the ATPase alpha/beta chains family. In terms of assembly, F-type ATPases have 2 components, CF(1) - the catalytic core - and CF(0) - the membrane proton channel. CF(1) has five subunits: alpha(3), beta(3), gamma(1), delta(1), epsilon(1). CF(0) has three main subunits: a(1), b(2) and c(9-12). The alpha and beta chains form an alternating ring which encloses part of the gamma chain. CF(1) is attached to CF(0) by a central stalk formed by the gamma and epsilon chains, while a peripheral stalk is formed by the delta and b chains.

The protein localises to the cell inner membrane. It catalyses the reaction ATP + H2O + 4 H(+)(in) = ADP + phosphate + 5 H(+)(out). Its function is as follows. Produces ATP from ADP in the presence of a proton gradient across the membrane. The alpha chain is a regulatory subunit. The polypeptide is ATP synthase subunit alpha (Burkholderia orbicola (strain AU 1054)).